Here is a 290-residue protein sequence, read N- to C-terminus: ATP synthase gamma chain (290 aa).

It belongs to the ATPase gamma chain family. F-type ATPases have 2 components, CF(1) - the catalytic core - and CF(0) - the membrane proton channel. CF(1) has five subunits: alpha(3), beta(3), gamma(1), delta(1), epsilon(1). CF(0) has three main subunits: a, b and c.

The protein resides in the cell inner membrane. Produces ATP from ADP in the presence of a proton gradient across the membrane. The gamma chain is believed to be important in regulating ATPase activity and the flow of protons through the CF(0) complex. This chain is ATP synthase gamma chain, found in Anaeromyxobacter dehalogenans (strain 2CP-1 / ATCC BAA-258).